Here is a 61-residue protein sequence, read N- to C-terminus: Putative neurotoxin-D (61 aa).

The signal sequence occupies residues 1–19 (MRTTVAILLVLFALSAILA). 3 disulfides stabilise this stretch: cysteine 31–cysteine 51, cysteine 37–cysteine 56, and cysteine 39–cysteine 58.

As to expression, expressed by the venom gland.

It is found in the secreted. This chain is Putative neurotoxin-D, found in Lychas mucronatus (Chinese swimming scorpion).